A 298-amino-acid polypeptide reads, in one-letter code: Tyrosine recombinase XerC (298 aa).

The region spanning 2 to 88 (TDLHTDVERY…ALRSFFDWLV (87 aa)) is the Core-binding (CB) domain. Residues 109–288 (HLPKNIDVDD…DFQHLASVYD (180 aa)) enclose the Tyr recombinase domain. Active-site residues include arginine 148, lysine 172, histidine 240, arginine 243, and histidine 266. Tyrosine 275 (O-(3'-phospho-DNA)-tyrosine intermediate) is an active-site residue.

The protein belongs to the 'phage' integrase family. XerC subfamily. As to quaternary structure, forms a cyclic heterotetrameric complex composed of two molecules of XerC and two molecules of XerD, in which XerC interacts with XerD via its C-terminal region, XerD interacts with XerC via its C-terminal region and so on.

It is found in the cytoplasm. FtsK may regulate the catalytic switch between XerC and XerD in the heterotetrameric complex during the two steps of the recombination process. Site-specific tyrosine recombinase, which acts by catalyzing the cutting and rejoining of the recombining DNA molecules. Binds cooperatively to specific DNA consensus sequences that are separated from XerD binding sites by a short central region, forming the heterotetrameric XerC-XerD complex that recombines DNA substrates. The complex is essential to convert dimers of the bacterial chromosome into monomers to permit their segregation at cell division. It also contributes to the segregational stability of plasmids. In the complex XerC specifically exchanges the top DNA strands. The chain is Tyrosine recombinase XerC from Escherichia coli O6:K15:H31 (strain 536 / UPEC).